The primary structure comprises 1302 residues: 1-phosphatidylinositol 4,5-bisphosphate phosphodiesterase gamma-1 (1302 aa).

Ala2 is modified (N-acetylalanine). The 116-residue stretch at 27–142 (RSLEVGTVMT…WIKGLTWLME (116 aa)) folds into the PH 1 domain. The EF-hand domain maps to 152–187 (QIERWLRKQFYSVDRNREDRISAKDLKNMLSQVNYR). 5 residues coordinate Ca(2+): Asp165, Asn167, Glu169, Arg171, and Asp176. The 145-residue stretch at 320–464 (DTMNNPLSHY…LRRKILIKHK (145 aa)) folds into the PI-PLC X-box domain. Active-site residues include His335 and His380. In terms of domain architecture, PH 2; first part spans 489-523 (SIKNGILYLEDPVNHEWYPHYFVLTSSKIYYSEET). Tyr506 is modified (phosphotyrosine). The segment at 522 to 545 (ETSSDQGNEDEEEPKEASSSTELH) is disordered. SH2 domains are found at residues 550-657 (WFHG…SEPV) and 668-756 (WYHA…RYPI). A Phosphotyrosine; by SYK modification is found at Tyr771. Residue Tyr775 is modified to Phosphotyrosine. Tyr783 carries the phosphotyrosine; by ITK, SYK and TXK modification. Positions 791–851 (TFKCAVKALF…PSNYVEEMIN (61 aa)) constitute an SH3 domain. Residues 895–931 (FVFSISMPSVAQWSLDVAADSQEELQDWVKKIREVAQ) form the PH 2; second part domain. In terms of domain architecture, PI-PLC Y-box spans 953–1070 (LSELVVYCRP…GYVLQPSTMR (118 aa)). Phosphotyrosine is present on Tyr977. Positions 1071 to 1194 (DEAFDPFDKS…TGYRAVPLKN (124 aa)) constitute a C2 domain. Ser1221, Ser1227, Ser1233, and Ser1248 each carry phosphoserine. Residue Tyr1253 is modified to Phosphotyrosine. Ser1263 bears the Phosphoserine mark.

Interacts (via SH2 domain) with FGFR1, FGFR2, FGFR3 and FGFR4 (phosphorylated). Interacts with RALGPS1. Interacts (via SH2 domains) with VIL1 (phosphorylated at C-terminus tyrosine phosphorylation sites). Interacts (via SH2 domain) with RET. Interacts with AGAP2 via its SH3 domain. Interacts with LAT (phosphorylated) upon TCR activation. Interacts (via SH3 domain) with the Pro-rich domain of TNK1. Associates with BLNK, VAV1, GRB2 and NCK1 in a B-cell antigen receptor-dependent fashion. Interacts with CBLB in activated T-cells; which inhibits phosphorylation. Interacts with SHB. Interacts (via SH3 domain) with the Arg/Gly-rich-flanked Pro-rich domains of KHDRBS1/SAM68. This interaction is selectively regulated by arginine methylation of KHDRBS1/SAM68. Interacts with INPP5D/SHIP1, THEMIS and CLNK. Interacts with FLT4 and KIT. Interacts with AXL. Interacts with SYK; activates PLCG1. Interacts with FLT1 (tyrosine-phosphorylated). Interacts (via SH2 domain) with PDGFRA and PDGFRB (tyrosine phosphorylated). Interacts with PIP5K1C. Interacts with NTRK1 and NTRK2 (phosphorylated upon ligand-binding). Interacts with TESPA1. Interacts with GRB2, LAT and THEMIS upon TCR activation in thymocytes; the association is weaker in the absence of TESPA1. Interacts (via C-terminal proline-rich domain (PRD)) with PLCG1 (via SH3 domain); this interaction leads to guanine nucleotide exchange from PlCG1 to DNM1 and enhances DNM1-dependent endocytosis. Ca(2+) is required as a cofactor. Tyrosine phosphorylated in response to signaling via activated FLT3, KIT and PDGFRA. Tyrosine phosphorylated by activated FGFR1, FGFR2, FGFR3 and FGFR4. Tyrosine phosphorylated by activated FLT1 and KDR. Tyrosine phosphorylated by activated PDGFRB. The receptor-mediated activation of PLCG1 involves its phosphorylation by tyrosine kinases in response to ligation of a variety of growth factor receptors and immune system receptors. For instance, SYK phosphorylates and activates PLCG1 in response to ligation of the B-cell receptor. Phosphorylated by ITK and TXK on Tyr-783 upon TCR activation in T-cells. May be dephosphorylated by PTPRJ. Post-translationally, ubiquitinated by CBLB in activated T-cells.

It localises to the cell projection. It is found in the lamellipodium. The protein resides in the ruffle. It carries out the reaction a 1,2-diacyl-sn-glycero-3-phospho-(1D-myo-inositol-4,5-bisphosphate) + H2O = 1D-myo-inositol 1,4,5-trisphosphate + a 1,2-diacyl-sn-glycerol + H(+). The catalysed reaction is a 1,2-diacyl-sn-glycero-3-phospho-(1D-myo-inositol) + H2O = 1D-myo-inositol 1-phosphate + a 1,2-diacyl-sn-glycerol + H(+). With respect to regulation, activated by phosphorylation on tyrosine residues. Functionally, mediates the production of the second messenger molecules diacylglycerol (DAG) and inositol 1,4,5-trisphosphate (IP3). Plays an important role in the regulation of intracellular signaling cascades. Becomes activated in response to ligand-mediated activation of receptor-type tyrosine kinases, such as PDGFRA, PDGFRB, EGFR, FGFR1, FGFR2, FGFR3 and FGFR4. Plays a role in actin reorganization and cell migration. Guanine nucleotide exchange factor that binds the GTPase DNM1 and catalyzes the dissociation of GDP, allowing a GTP molecule to bind in its place, therefore enhancing DNM1-dependent endocytosis. The sequence is that of 1-phosphatidylinositol 4,5-bisphosphate phosphodiesterase gamma-1 from Mus musculus (Mouse).